A 140-amino-acid polypeptide reads, in one-letter code: Prepilin peptidase-dependent protein A (140 aa).

Residues 1–23 (MLLLKASAICGKGNEGKRNKKGG) constitute a propeptide that is removed on maturation. Position 24 is an N-methylphenylalanine (Phe-24). A helical transmembrane segment spans residues 24 to 44 (FTLIELTVVLAIMAIILMVIA).

It is found in the membrane. Not yet known. The sequence is that of Prepilin peptidase-dependent protein A (ppdA) from Clostridium perfringens (strain 13 / Type A).